The following is a 345-amino-acid chain: CRISPR-associated endonuclease Cas1 1 (345 aa).

A divalent metal cation-binding residues include glutamate 168, histidine 239, and glutamate 254.

Belongs to the CRISPR-associated endonuclease Cas1 family. Forms a heterotetramer with a Cas2 homodimer. Homodimer. It depends on a divalent metal cation as a cofactor.

In terms of biological role, CRISPR (clustered regularly interspaced short palindromic repeat), is an adaptive immune system that provides protection against mobile genetic elements (viruses, transposable elements and conjugative plasmids). CRISPR clusters contain sequences complementary to antecedent mobile elements and target invading nucleic acids. CRISPR clusters are transcribed and processed into CRISPR RNA (crRNA). Involved in the integration of spacer DNA into the CRISPR cassette. Acts as a dsDNA and ssRNA nuclease, binds to linear and circular dsDNA and linear ssRNA and ssDNA. The chain is CRISPR-associated endonuclease Cas1 1 from Archaeoglobus fulgidus (strain ATCC 49558 / DSM 4304 / JCM 9628 / NBRC 100126 / VC-16).